Reading from the N-terminus, the 480-residue chain is 2-succinylbenzoate--CoA ligase (480 aa).

It belongs to the ATP-dependent AMP-binding enzyme family. MenE subfamily.

It carries out the reaction 2-succinylbenzoate + ATP + CoA = 2-succinylbenzoyl-CoA + AMP + diphosphate. Its pathway is quinol/quinone metabolism; 1,4-dihydroxy-2-naphthoate biosynthesis; 1,4-dihydroxy-2-naphthoate from chorismate: step 5/7. It functions in the pathway quinol/quinone metabolism; menaquinone biosynthesis. Converts 2-succinylbenzoate (OSB) to 2-succinylbenzoyl-CoA (OSB-CoA). The sequence is that of 2-succinylbenzoate--CoA ligase from Oceanobacillus iheyensis (strain DSM 14371 / CIP 107618 / JCM 11309 / KCTC 3954 / HTE831).